The primary structure comprises 186 residues: TATA-box-binding protein D (186 aa).

Tandem repeats lie at residues 10-86 (IENV…VEDL) and 101-179 (VQNI…HERL).

Belongs to the TBP family.

Functionally, general factor that plays a role in the activation of archaeal genes transcribed by RNA polymerase. Binds specifically to the TATA box promoter element which lies close to the position of transcription initiation. In Halobacterium salinarum (strain ATCC 700922 / JCM 11081 / NRC-1) (Halobacterium halobium), this protein is TATA-box-binding protein D (tbpD).